A 25-amino-acid polypeptide reads, in one-letter code: HAKDVVFGGEARARMVEGVNILANA.

It belongs to the chaperonin (HSP60) family. In terms of assembly, forms a cylinder of 14 subunits composed of two heptameric rings stacked back-to-back. Interacts with the co-chaperonin GroES.

It is found in the cytoplasm. The catalysed reaction is ATP + H2O + a folded polypeptide = ADP + phosphate + an unfolded polypeptide.. Its function is as follows. Together with its co-chaperonin GroES, plays an essential role in assisting protein folding. The GroEL-GroES system forms a nano-cage that allows encapsulation of the non-native substrate proteins and provides a physical environment optimized to promote and accelerate protein folding. The sequence is that of Chaperonin GroEL from Delftia acidovorans (Pseudomonas acidovorans).